Here is a 483-residue protein sequence, read N- to C-terminus: ATP-dependent RNA helicase DDX25 (483 aa).

Residues 61-74 (LAANSLLNKLIRQS) carry the Nuclear export signal motif. The short motif at 97–125 (KTFEELRLKEELLKGIYAMGFNRPSKIQE) is the Q motif element. Residues 100-114 (EELRLKEELLKGIYA) carry the Nuclear localization signal motif. The Helicase ATP-binding domain maps to 130–300 (MMLAHPPQNL…ERIIPDPNVI (171 aa)). 143–150 (SQSGTGKT) lines the ATP pocket. A DEAD box motif is present at residues 247-250 (DEAD). The region spanning 311–478 (NIRQYYVLCG…QLDPEDMDEI (168 aa)) is the Helicase C-terminal domain.

This sequence belongs to the DEAD box helicase family. In terms of processing, phosphorylated on threonine residues. The phosphorylated form is found in the cytoplasm but not in the nucleus.

It localises to the cytoplasm. The protein localises to the nucleus. It carries out the reaction ATP + H2O = ADP + phosphate + H(+). ATP-dependent RNA helicase. Required for mRNA export and translation regulation during spermatid development. The protein is ATP-dependent RNA helicase DDX25 (DDX25) of Bos taurus (Bovine).